We begin with the raw amino-acid sequence, 200 residues long: Inner membrane-spanning protein YciB (200 aa).

A run of 6 helical transmembrane segments spans residues 7 to 27, 32 to 52, 56 to 76, 93 to 113, 126 to 146, and 153 to 173; these read HPLF…FVNA, FAAT…SYVV, IPLM…LTLV, LFAA…AIMF, ILTF…EIIW, and FWVG…AIAQ.

This sequence belongs to the YciB family.

The protein resides in the cell inner membrane. Functionally, plays a role in cell envelope biogenesis, maintenance of cell envelope integrity and membrane homeostasis. In Bradyrhizobium sp. (strain ORS 278), this protein is Inner membrane-spanning protein YciB.